The chain runs to 570 residues: ATP-dependent RNA helicase ROK1 (570 aa).

The span at 69–78 (ETHAEDKEDK) shows a compositional bias: basic and acidic residues. The tract at residues 69-96 (ETHAEDKEDKDNDNEEDEIKEEESLQYQ) is disordered. The span at 79-89 (DNDNEEDEIKE) shows a compositional bias: acidic residues. The short motif at 131–159 (DLITRFSFDKRLLNNLILNHFTEPTPIQC) is the Q motif element. The region spanning 162 to 342 (IPLALNNRDM…KSIMMDPVRV (181 aa)) is the Helicase ATP-binding domain. 175 to 182 (APTGSGKT) serves as a coordination point for ATP. The short motif at 289–292 (DEAD) is the DEAD box element. A Helicase C-terminal domain is found at 353–515 (SIEQKLVFCG…EISEWMEKVS (163 aa)).

This sequence belongs to the DEAD box helicase family. DDX52/ROK1 subfamily. As to quaternary structure, interacts with the U3 snoRNA and is associated with the 90S and 40S pre-ribosomes.

The protein localises to the nucleus. It is found in the nucleolus. The enzyme catalyses ATP + H2O = ADP + phosphate + H(+). Functionally, ATP-dependent RNA helicase involved in 40S ribosomal subunit biogenesis. Required for the processing and cleavage of 35S pre-rRNA at sites A0, A1, and A2, leading to mature 18S rRNA. The polypeptide is ATP-dependent RNA helicase ROK1 (ROK1) (Vanderwaltozyma polyspora (strain ATCC 22028 / DSM 70294 / BCRC 21397 / CBS 2163 / NBRC 10782 / NRRL Y-8283 / UCD 57-17) (Kluyveromyces polysporus)).